We begin with the raw amino-acid sequence, 194 residues long: MTDTWLIVGLGNPGSEYSNNRHNVGQMVLDELASRMGGKFKVHKARAQVVEGRLGIGGPRVVLAKPMTYMNVSGGPVAGLCNFFDIAPDHVIAVHDEIDIPFNTVKLKMGGGEGGHNGLRDISKALATKDYLRVRVGVGRPPGRMETADYVLRDFATAEKKELPFLLDEAADAVELLMDQGLLAAQQKHHPAKA.

Residue Tyr-17 coordinates tRNA. His-22 acts as the Proton acceptor in catalysis. TRNA-binding residues include Tyr-69, Asn-71, and Asn-117.

The protein belongs to the PTH family. In terms of assembly, monomer.

The protein resides in the cytoplasm. The catalysed reaction is an N-acyl-L-alpha-aminoacyl-tRNA + H2O = an N-acyl-L-amino acid + a tRNA + H(+). Functionally, hydrolyzes ribosome-free peptidyl-tRNAs (with 1 or more amino acids incorporated), which drop off the ribosome during protein synthesis, or as a result of ribosome stalling. Catalyzes the release of premature peptidyl moieties from peptidyl-tRNA molecules trapped in stalled 50S ribosomal subunits, and thus maintains levels of free tRNAs and 50S ribosomes. This is Peptidyl-tRNA hydrolase from Paenarthrobacter aurescens (strain TC1).